The sequence spans 295 residues: MTTAAELRAESARLLAAKGGNSQGLVPTMGALHSGHAALARTAVAENDVVVATIFVNPLQFGDAVDLDRYPRTLDADMALLDAEGVDLVFAPSVDEVYPGGQPLVRVTSGPLGEKWEGASRPGHFDGALTVVAKLLHYGLPGGAAADGTTAAYRAYFGQKDAQQLALVKRMVSDLNFPVEIIPVPIVRSEDGLALSSRNRFLSDAERDAALVLSRALRLIESRANAHEPLHLDSAVALVESQPLVELDYFDVVDPATLEPLAENCKETPFRGEGLAIIAAKVGAVRLIDNAPLFS.

Residue 29–36 coordinates ATP; that stretch reads MGALHSGH. Residue His-36 is the Proton donor of the active site. Gln-60 lines the (R)-pantoate pocket. A beta-alanine-binding site is contributed by Gln-60. 158-161 contacts ATP; sequence GQKD. Gln-164 is a binding site for (R)-pantoate. ATP-binding positions include Val-187 and 195-198; that span reads LSSR.

This sequence belongs to the pantothenate synthetase family. Homodimer.

The protein resides in the cytoplasm. The enzyme catalyses (R)-pantoate + beta-alanine + ATP = (R)-pantothenate + AMP + diphosphate + H(+). The protein operates within cofactor biosynthesis; (R)-pantothenate biosynthesis; (R)-pantothenate from (R)-pantoate and beta-alanine: step 1/1. Catalyzes the condensation of pantoate with beta-alanine in an ATP-dependent reaction via a pantoyl-adenylate intermediate. In Paenarthrobacter aurescens (strain TC1), this protein is Pantothenate synthetase.